The chain runs to 536 residues: Probable monofunctional riboflavin biosynthesis protein RIBA 3, chloroplastic (536 aa).

The transit peptide at 1–43 directs the protein to the chloroplast; it reads MDRVLLSSQLSSQTVVNTRVQQGSGGINSIGFAVIRKGSLKLR. Residues 44–310 form an inactive DHBP synthase region; that stretch reads CYAIGGLGGG…IADLIRYRRK (267 aa). D-ribulose 5-phosphate-binding positions include 133-134, aspartate 138, and 248-252; these read GD and RAGHT. The interval 311–536 is GTP cyclohydrolase II; that stretch reads REKLVELIAV…GDQDEDDTHN (226 aa). 361-365 is a GTP binding site; that stretch reads RVHSE. Residues cysteine 366, cysteine 377, and cysteine 379 each contribute to the Zn(2+) site. GTP is bound by residues glutamine 382, 405–407, and threonine 427; that span reads EGR. The active-site Proton acceptor; for GTP cyclohydrolase activity is the aspartate 439. The active-site Nucleophile; for GTP cyclohydrolase activity is arginine 441. GTP contacts are provided by threonine 462 and lysine 467. The tract at residues 507–536 is disordered; sequence YGSDLPGNVPEEFLNPDDIAGDQDEDDTHN. The span at 525–536 shows a compositional bias: acidic residues; sequence IAGDQDEDDTHN.

This sequence in the N-terminal section; belongs to the DHBP synthase family. In the C-terminal section; belongs to the GTP cyclohydrolase II family. The cofactor is Zn(2+).

It localises to the plastid. It is found in the chloroplast. The enzyme catalyses GTP + 4 H2O = 2,5-diamino-6-hydroxy-4-(5-phosphoribosylamino)-pyrimidine + formate + 2 phosphate + 3 H(+). It functions in the pathway cofactor biosynthesis; riboflavin biosynthesis; 5-amino-6-(D-ribitylamino)uracil from GTP: step 1/4. Involved in riboflavin biosynthesis. Catalyzes the conversion of GTP to 2,5-diamino-6-ribosylamino-4(3H)-pyrimidinone 5'-phosphate (DARP), formate and pyrophosphate. The sequence is that of Probable monofunctional riboflavin biosynthesis protein RIBA 3, chloroplastic (RIBA3) from Oryza sativa subsp. japonica (Rice).